The sequence spans 762 residues: uncharacterized protein (762 aa).

The disordered stretch occupies residues 1-26 (MENLKSASPEEDSPRHGDNMGKPKRI). Over residues 12–21 (DSPRHGDNMG) the composition is skewed to basic and acidic residues. The segment at residues 30–57 (CDMCRKRKIRCDGKQPACSNCVSHGIPC) is a DNA-binding region (zn(2)-C6 fungal-type). The segment at 647–668 (QSHVPPRISSNHSDTSVKSNSP) is disordered.

It is found in the nucleus. This is an uncharacterized protein from Schizosaccharomyces pombe (strain 972 / ATCC 24843) (Fission yeast).